A 197-amino-acid polypeptide reads, in one-letter code: Small ribosomal subunit protein uS2 (197 aa).

The protein belongs to the universal ribosomal protein uS2 family.

This chain is Small ribosomal subunit protein uS2 (rps2), found in Archaeoglobus fulgidus (strain ATCC 49558 / DSM 4304 / JCM 9628 / NBRC 100126 / VC-16).